Here is a 558-residue protein sequence, read N- to C-terminus: 2-isopropylmalate synthase (558 aa).

The region spanning 28-304 (PIWCSVDLRD…DPELEFSNLN (277 aa)) is the Pyruvate carboxyltransferase domain. Mg(2+) contacts are provided by Asp-37, His-243, His-245, and Asn-279. Residues 438–558 (NRSPYYLKNY…VSALNRSKLK (121 aa)) are regulatory domain.

This sequence belongs to the alpha-IPM synthase/homocitrate synthase family. LeuA type 2 subfamily. As to quaternary structure, homodimer. It depends on Mg(2+) as a cofactor.

The protein resides in the cytoplasm. It catalyses the reaction 3-methyl-2-oxobutanoate + acetyl-CoA + H2O = (2S)-2-isopropylmalate + CoA + H(+). The protein operates within amino-acid biosynthesis; L-leucine biosynthesis; L-leucine from 3-methyl-2-oxobutanoate: step 1/4. In terms of biological role, catalyzes the condensation of the acetyl group of acetyl-CoA with 3-methyl-2-oxobutanoate (2-ketoisovalerate) to form 3-carboxy-3-hydroxy-4-methylpentanoate (2-isopropylmalate). This chain is 2-isopropylmalate synthase, found in Clostridium acetobutylicum (strain ATCC 824 / DSM 792 / JCM 1419 / IAM 19013 / LMG 5710 / NBRC 13948 / NRRL B-527 / VKM B-1787 / 2291 / W).